The following is a 432-amino-acid chain: Glutamyl-tRNA reductase (432 aa).

Residues 55 to 58 (TCNR), Ser-114, 119 to 121 (ETQ), and Gln-125 each bind substrate. Catalysis depends on Cys-56, which acts as the Nucleophile. 194-199 (GAGEMI) contributes to the NADP(+) binding site.

The protein belongs to the glutamyl-tRNA reductase family. Homodimer.

It catalyses the reaction (S)-4-amino-5-oxopentanoate + tRNA(Glu) + NADP(+) = L-glutamyl-tRNA(Glu) + NADPH + H(+). The protein operates within porphyrin-containing compound metabolism; protoporphyrin-IX biosynthesis; 5-aminolevulinate from L-glutamyl-tRNA(Glu): step 1/2. In terms of biological role, catalyzes the NADPH-dependent reduction of glutamyl-tRNA(Glu) to glutamate 1-semialdehyde (GSA). The polypeptide is Glutamyl-tRNA reductase (Burkholderia ambifaria (strain MC40-6)).